A 334-amino-acid polypeptide reads, in one-letter code: Glyoxylate reductase (334 aa).

NADP(+)-binding positions include 158–161 (FGRI), 180–182 (SRT), and 239–241 (IAR). Catalysis depends on residues Arg-241 and Glu-270. The Proton donor role is filled by His-288. 288-290 (HIG) serves as a coordination point for NADP(+).

Belongs to the D-isomer specific 2-hydroxyacid dehydrogenase family. GyaR subfamily. As to quaternary structure, homodimer.

The protein localises to the cytoplasm. The enzyme catalyses glycolate + NAD(+) = glyoxylate + NADH + H(+). The protein is Glyoxylate reductase of Thermococcus onnurineus (strain NA1).